Reading from the N-terminus, the 225-residue chain is Tryptophan synthase beta chain (225 aa).

The protein belongs to the TrpB family. As to quaternary structure, tetramer of two alpha and two beta chains. The cofactor is pyridoxal 5'-phosphate.

It carries out the reaction (1S,2R)-1-C-(indol-3-yl)glycerol 3-phosphate + L-serine = D-glyceraldehyde 3-phosphate + L-tryptophan + H2O. The protein operates within amino-acid biosynthesis; L-tryptophan biosynthesis; L-tryptophan from chorismate: step 5/5. In terms of biological role, the beta subunit is responsible for the synthesis of L-tryptophan from indole and L-serine. The sequence is that of Tryptophan synthase beta chain (trpB) from Buchnera aphidicola subsp. Rhopalosiphum padi.